The following is a 369-amino-acid chain: Porin-like protein BUsg_347 (369 aa).

The signal sequence occupies residues 1–23 (MKNHKSLAILIPMLFAGSTAVNA).

The protein belongs to the Gram-negative porin family. As to quaternary structure, homotrimer.

The protein localises to the cell outer membrane. Its function is as follows. Forms pores that allow passive diffusion of small molecules across the membrane. The polypeptide is Porin-like protein BUsg_347 (Buchnera aphidicola subsp. Schizaphis graminum (strain Sg)).